Here is a 146-residue protein sequence, read N- to C-terminus: Large ribosomal subunit protein bL21 (146 aa).

Positions 95-104 (PKKKTRRKMG) are enriched in basic residues. Positions 95 to 146 (PKKKTRRKMGHRQELTRVMVKSISISKSTPKSSPKTEATKKSTSSKASKPEN) are disordered. Residues 115–146 (KSISISKSTPKSSPKTEATKKSTSSKASKPEN) show a composition bias toward low complexity.

It belongs to the bacterial ribosomal protein bL21 family. Part of the 50S ribosomal subunit. Contacts protein L20.

This protein binds to 23S rRNA in the presence of protein L20. The protein is Large ribosomal subunit protein bL21 of Prochlorococcus marinus (strain MIT 9515).